We begin with the raw amino-acid sequence, 113 residues long: U11-theraphotoxin-Hhn1a (113 aa).

A signal peptide spans 1–21; it reads MNTVRVTFLLVFVLAVSLGRA. A propeptide spanning residues 22 to 74 is cleaved from the precursor; it reads DKEENRMEMQEKTEQGKSYLDFAENLLLQKLEELEAKLLEEDSEESRNSRQKR. Residues 61 to 83 form a disordered region; that stretch reads EEDSEESRNSRQKRCIGEGVPCD. 3 disulfide bridges follow: Cys-75/Cys-90, Cys-82/Cys-95, and Cys-89/Cys-110.

It belongs to the neurotoxin 14 (magi-1) family. 01 (HNTX-16) subfamily. Expressed by the venom gland.

Its subcellular location is the secreted. Probable ion channel inhibitor. This chain is U11-theraphotoxin-Hhn1a, found in Cyriopagopus hainanus (Chinese bird spider).